The chain runs to 342 residues: Nucleoid-associated protein Shewmr4_2217 (342 aa).

The protein belongs to the YejK family.

Its subcellular location is the cytoplasm. The protein localises to the nucleoid. The chain is Nucleoid-associated protein Shewmr4_2217 from Shewanella sp. (strain MR-4).